The sequence spans 526 residues: ATP synthase subunit alpha (526 aa).

171 to 178 (GDRQTGKT) is a binding site for ATP.

The protein belongs to the ATPase alpha/beta chains family. In terms of assembly, F-type ATPases have 2 components, CF(1) - the catalytic core - and CF(0) - the membrane proton channel. CF(1) has five subunits: alpha(3), beta(3), gamma(1), delta(1), epsilon(1). CF(0) has four main subunits: a(1), b(1), b'(1) and c(9-12).

It localises to the cell inner membrane. The enzyme catalyses ATP + H2O + 4 H(+)(in) = ADP + phosphate + 5 H(+)(out). Produces ATP from ADP in the presence of a proton gradient across the membrane. The alpha chain is a regulatory subunit. This Chlorobium phaeobacteroides (strain DSM 266 / SMG 266 / 2430) protein is ATP synthase subunit alpha.